The sequence spans 429 residues: Serine--tRNA ligase (429 aa).

229 to 231 lines the L-serine pocket; it reads TAE. An ATP-binding site is contributed by 260–262; sequence RSE. Glu-283 lines the L-serine pocket. 347–350 provides a ligand contact to ATP; that stretch reads EISS. Position 383 (Ser-383) interacts with L-serine.

Belongs to the class-II aminoacyl-tRNA synthetase family. Type-1 seryl-tRNA synthetase subfamily. In terms of assembly, homodimer. The tRNA molecule binds across the dimer.

It is found in the cytoplasm. It carries out the reaction tRNA(Ser) + L-serine + ATP = L-seryl-tRNA(Ser) + AMP + diphosphate + H(+). The enzyme catalyses tRNA(Sec) + L-serine + ATP = L-seryl-tRNA(Sec) + AMP + diphosphate + H(+). It functions in the pathway aminoacyl-tRNA biosynthesis; selenocysteinyl-tRNA(Sec) biosynthesis; L-seryl-tRNA(Sec) from L-serine and tRNA(Sec): step 1/1. Functionally, catalyzes the attachment of serine to tRNA(Ser). Is also able to aminoacylate tRNA(Sec) with serine, to form the misacylated tRNA L-seryl-tRNA(Sec), which will be further converted into selenocysteinyl-tRNA(Sec). The polypeptide is Serine--tRNA ligase (Orientia tsutsugamushi (strain Boryong) (Rickettsia tsutsugamushi)).